The sequence spans 374 residues: Chaperone protein DnaJ (374 aa).

The region spanning 5 to 70 (DFYEILGVSK…EKRSAYDRMG (66 aa)) is the J domain. The segment at 133-211 (GCKKEISFTA…CHGNGVKDKS (79 aa)) adopts a CR-type zinc-finger fold. Positions 146, 149, 163, 166, 185, 188, 199, and 202 each coordinate Zn(2+). CXXCXGXG motif repeat units lie at residues 146 to 153 (CDTCDGKG), 163 to 170 (CQTCHGQG), 185 to 192 (CPHCGGTG), and 199 to 206 (CSDCHGNG).

This sequence belongs to the DnaJ family. In terms of assembly, homodimer. Requires Zn(2+) as cofactor.

It is found in the cytoplasm. Functionally, participates actively in the response to hyperosmotic and heat shock by preventing the aggregation of stress-denatured proteins and by disaggregating proteins, also in an autonomous, DnaK-independent fashion. Unfolded proteins bind initially to DnaJ; upon interaction with the DnaJ-bound protein, DnaK hydrolyzes its bound ATP, resulting in the formation of a stable complex. GrpE releases ADP from DnaK; ATP binding to DnaK triggers the release of the substrate protein, thus completing the reaction cycle. Several rounds of ATP-dependent interactions between DnaJ, DnaK and GrpE are required for fully efficient folding. Also involved, together with DnaK and GrpE, in the DNA replication of plasmids through activation of initiation proteins. The protein is Chaperone protein DnaJ of Psychrobacter arcticus (strain DSM 17307 / VKM B-2377 / 273-4).